Consider the following 239-residue polypeptide: Ribosomal RNA small subunit methyltransferase G (239 aa).

S-adenosyl-L-methionine-binding positions include glycine 79, phenylalanine 84, 130-131 (AE), and arginine 149.

Belongs to the methyltransferase superfamily. RNA methyltransferase RsmG family.

The protein resides in the cytoplasm. In terms of biological role, specifically methylates the N7 position of a guanine in 16S rRNA. The polypeptide is Ribosomal RNA small subunit methyltransferase G (Lactobacillus delbrueckii subsp. bulgaricus (strain ATCC BAA-365 / Lb-18)).